The primary structure comprises 458 residues: Phosphoglucosamine mutase (458 aa).

Catalysis depends on Ser-108, which acts as the Phosphoserine intermediate. Mg(2+) is bound by residues Ser-108, Asp-247, Asp-249, and Asp-251. The residue at position 108 (Ser-108) is a Phosphoserine.

Belongs to the phosphohexose mutase family. Requires Mg(2+) as cofactor. Post-translationally, activated by phosphorylation.

The enzyme catalyses alpha-D-glucosamine 1-phosphate = D-glucosamine 6-phosphate. Its function is as follows. Catalyzes the conversion of glucosamine-6-phosphate to glucosamine-1-phosphate. In Thiobacillus denitrificans (strain ATCC 25259 / T1), this protein is Phosphoglucosamine mutase.